We begin with the raw amino-acid sequence, 171 residues long: Shikimate kinase (171 aa).

11-16 (ATGKTT) lines the ATP pocket. Residue Thr15 coordinates Mg(2+). Residues Asp33, Arg57, and Gly79 each coordinate substrate. Arg117 lines the ATP pocket. Arg136 serves as a coordination point for substrate.

This sequence belongs to the shikimate kinase family. In terms of assembly, monomer. The cofactor is Mg(2+).

Its subcellular location is the cytoplasm. It carries out the reaction shikimate + ATP = 3-phosphoshikimate + ADP + H(+). The protein operates within metabolic intermediate biosynthesis; chorismate biosynthesis; chorismate from D-erythrose 4-phosphate and phosphoenolpyruvate: step 5/7. Its function is as follows. Catalyzes the specific phosphorylation of the 3-hydroxyl group of shikimic acid using ATP as a cosubstrate. The protein is Shikimate kinase of Thermoanaerobacter pseudethanolicus (strain ATCC 33223 / 39E) (Clostridium thermohydrosulfuricum).